A 511-amino-acid polypeptide reads, in one-letter code: Trafficking protein particle complex subunit 13 homolog (511 aa).

The protein belongs to the TRAPPC13 family.

The protein is Trafficking protein particle complex subunit 13 homolog of Dictyostelium discoideum (Social amoeba).